Reading from the N-terminus, the 472-residue chain is Siroheme synthase (472 aa).

The interval 1 to 207 (MNFLPIFLDI…GKDQAAKAWL (207 aa)) is precorrin-2 dehydrogenase /sirohydrochlorin ferrochelatase. Residues 22 to 23 (EV) and 43 to 44 (PR) each bind NAD(+). A Phosphoserine modification is found at S132. A uroporphyrinogen-III C-methyltransferase region spans residues 221–472 (GEVYLVGAGP…QPEGNLPGAE (252 aa)). P230 contributes to the S-adenosyl-L-methionine binding site. The active-site Proton acceptor is D253. K275 acts as the Proton donor in catalysis. Residues 306 to 308 (GGD), I311, 336 to 337 (TA), M388, and G417 contribute to the S-adenosyl-L-methionine site.

In the N-terminal section; belongs to the precorrin-2 dehydrogenase / sirohydrochlorin ferrochelatase family. The protein in the C-terminal section; belongs to the precorrin methyltransferase family.

It catalyses the reaction uroporphyrinogen III + 2 S-adenosyl-L-methionine = precorrin-2 + 2 S-adenosyl-L-homocysteine + H(+). The catalysed reaction is precorrin-2 + NAD(+) = sirohydrochlorin + NADH + 2 H(+). The enzyme catalyses siroheme + 2 H(+) = sirohydrochlorin + Fe(2+). It participates in cofactor biosynthesis; adenosylcobalamin biosynthesis; precorrin-2 from uroporphyrinogen III: step 1/1. Its pathway is cofactor biosynthesis; adenosylcobalamin biosynthesis; sirohydrochlorin from precorrin-2: step 1/1. It functions in the pathway porphyrin-containing compound metabolism; siroheme biosynthesis; precorrin-2 from uroporphyrinogen III: step 1/1. The protein operates within porphyrin-containing compound metabolism; siroheme biosynthesis; siroheme from sirohydrochlorin: step 1/1. It participates in porphyrin-containing compound metabolism; siroheme biosynthesis; sirohydrochlorin from precorrin-2: step 1/1. Its function is as follows. Multifunctional enzyme that catalyzes the SAM-dependent methylations of uroporphyrinogen III at position C-2 and C-7 to form precorrin-2 via precorrin-1. Then it catalyzes the NAD-dependent ring dehydrogenation of precorrin-2 to yield sirohydrochlorin. Finally, it catalyzes the ferrochelation of sirohydrochlorin to yield siroheme. This chain is Siroheme synthase, found in Nitrosospira multiformis (strain ATCC 25196 / NCIMB 11849 / C 71).